A 310-amino-acid chain; its full sequence is N-acetyl-gamma-glutamyl-phosphate reductase (310 aa).

The active site involves Cys117.

This sequence belongs to the NAGSA dehydrogenase family. Type 2 subfamily.

It is found in the cytoplasm. It catalyses the reaction N-acetyl-L-glutamate 5-semialdehyde + phosphate + NADP(+) = N-acetyl-L-glutamyl 5-phosphate + NADPH + H(+). It functions in the pathway amino-acid biosynthesis; L-arginine biosynthesis; N(2)-acetyl-L-ornithine from L-glutamate: step 3/4. Its function is as follows. Catalyzes the NADPH-dependent reduction of N-acetyl-5-glutamyl phosphate to yield N-acetyl-L-glutamate 5-semialdehyde. The chain is N-acetyl-gamma-glutamyl-phosphate reductase from Brucella ovis (strain ATCC 25840 / 63/290 / NCTC 10512).